The chain runs to 339 residues: RNA 3'-terminal phosphate cyclase (339 aa).

ATP is bound by residues Gln-103 and 283–287 (HLADQ). The active-site Tele-AMP-histidine intermediate is His-308.

The protein belongs to the RNA 3'-terminal cyclase family. Type 1 subfamily.

The protein localises to the cytoplasm. It carries out the reaction a 3'-end 3'-phospho-ribonucleotide-RNA + ATP = a 3'-end 2',3'-cyclophospho-ribonucleotide-RNA + AMP + diphosphate. Functionally, catalyzes the conversion of 3'-phosphate to a 2',3'-cyclic phosphodiester at the end of RNA. The mechanism of action of the enzyme occurs in 3 steps: (A) adenylation of the enzyme by ATP; (B) transfer of adenylate to an RNA-N3'P to produce RNA-N3'PP5'A; (C) and attack of the adjacent 2'-hydroxyl on the 3'-phosphorus in the diester linkage to produce the cyclic end product. The biological role of this enzyme is unknown but it is likely to function in some aspects of cellular RNA processing. This chain is RNA 3'-terminal phosphate cyclase, found in Salmonella typhimurium (strain LT2 / SGSC1412 / ATCC 700720).